The sequence spans 540 residues: Beta-secretase (540 aa).

The N-terminal stretch at 1–31 (MHFSLPTSRIVVVVPAAAICIVCVLIETCTA) is a signal peptide. Residues 81 to 435 (YYIEVDIGTP…DRENKRVGFA (355 aa)) enclose the Peptidase A1 domain. Residues D99 and D302 contribute to the active site. Disulfide bonds link C222–C439, C291–C469, and C345–C397. A helical membrane pass occupies residues 483–503 (ITAYVLAAICLVCLIPVIVFA). Over 504-540 (LTHQINKRCKGRRGRGVVNHHRLDQEGLAENEPNSDP) the chain is Cytoplasmic.

The protein belongs to the peptidase A1 family.

Its subcellular location is the membrane. This Strongylocentrotus purpuratus (Purple sea urchin) protein is Beta-secretase.